A 257-amino-acid polypeptide reads, in one-letter code: Type I iodothyronine deiodinase (257 aa).

Over 1–12 (MGLPGLGLLLKR) the chain is Extracellular. The chain crosses the membrane as a helical; Signal-anchor for type III membrane protein span at residues 13–33 (FGVLVRVALKVAVGKVLLTLW). Residues 34-257 (PSAIRPHLLA…CRSSAQSPRL (224 aa)) are Cytoplasmic-facing. U126 is an active-site residue. Residue U126 is a non-standard amino acid, selenocysteine.

It belongs to the iodothyronine deiodinase family. As to quaternary structure, predominantly monomer. Can form homodimers but homodimerization is not essential for enzyme activity. In terms of tissue distribution, liver specific.

The protein resides in the cell membrane. The protein localises to the endoplasmic reticulum membrane. It is found in the basolateral cell membrane. It catalyses the reaction 3,3',5-triiodo-L-thyronine + iodide + A + H(+) = L-thyroxine + AH2. It carries out the reaction 3,3',5'-triiodo-L-thyronine + iodide + A + H(+) = L-thyroxine + AH2. The catalysed reaction is 3,3'-diiodo-L-thyronine + iodide + A + H(+) = 3,3',5'-triiodo-L-thyronine + AH2. The enzyme catalyses 3,3'-diiodo-L-thyronine + iodide + A + H(+) = 3,3',5-triiodo-L-thyronine + AH2. It catalyses the reaction 3'-iodo-L-thyronine + iodide + A + H(+) = 3',5'-diiodo-L-thyronine + AH2. It carries out the reaction 3-iodo-L-thyronine + iodide + A + H(+) = 3,5-diiodo-L-thyronine + AH2. The catalysed reaction is 3-iodo-L-thyronine + iodide + A + H(+) = 3,3'-diiodo-L-thyronine + AH2. The enzyme catalyses 3,3'-diiodothyronamine + iodide + A + H(+) = 3,3',5'-triiodothyronamine + AH2. It catalyses the reaction 3'-iodothyronamine + iodide + A + H(+) = 3',5'-diiodothyronamine + AH2. It carries out the reaction 3-iodothyronamine + iodide + A + H(+) = 3,3'-diiodothyronamine + AH2. The catalysed reaction is 3,3'-diiodothyronamine + iodide + A + H(+) = 3,3',5-triiodothyronamine + AH2. The enzyme catalyses 3-iodothyronamine + iodide + A + H(+) = 3,5-diiodothyronamine + AH2. It catalyses the reaction 3,3'-diiodo-L-thyronine sulfate + iodide + A + H(+) = 3,3',5'-triiodo-L-thyronine sulfate + AH2. It carries out the reaction 3,3',5'-triiodo-L-thyronine sulfate + iodide + A + H(+) = L-thyroxine sulfate + AH2. The catalysed reaction is 3,3'-diiodo-L-thyronine sulfate + iodide + A + H(+) = 3,3',5-triiodo-L-thyronine sulfate + AH2. Its function is as follows. Plays a crucial role in the metabolism of thyroid hormones (TH) and has specific roles in TH activation and inactivation by deiodination. Catalyzes the deiodination of L-thyroxine (T4) to 3,5,3'-triiodothyronine (T3) and 3',5'-diiodothyronine (3',5'-T2) to 3'-monoiodothyronine (3'-T1) via outer-ring deiodination (ORD). Catalyzes the deiodination of T4 to 3,3',5'-triiodothyronine (rT3), T3 to 3,3'-diiodothyronine (3,3'-T2), 3,5-diiodothyronine (3,5-T2) to 3-monoiodothyronine (3-T1) and 3,3'-T2 to 3-T1 via inner-ring deiodination (IRD). Catalyzes the deiodination of rT3 to 3,3'-T2 via ORD. Catalyzes the phenolic ring deiodinations of 3,3',5'-triiodothyronamine, 3',5'-diiodothyronamine and 3,3'-diiodothyronamine as well as tyrosyl ring deiodinations of 3,5,3'-triiodothyronamine and 3,5-diiodothyronamine. Catalyzes the deiodination of L-thyroxine sulfate and 3,3',5-triiodo-L-thyronine sulfate via IRD and of 3,3',5'-triiodo-L-thyronine sulfate via ORD. This chain is Type I iodothyronine deiodinase (DIO1), found in Suncus murinus (Asian house shrew).